Consider the following 66-residue polypeptide: Large ribosomal subunit protein uL30 (66 aa).

It belongs to the universal ribosomal protein uL30 family. Part of the 50S ribosomal subunit.

The sequence is that of Large ribosomal subunit protein uL30 from Chloroherpeton thalassium (strain ATCC 35110 / GB-78).